A 229-amino-acid polypeptide reads, in one-letter code: Orotidine 5'-phosphate decarboxylase (229 aa).

Substrate is bound by residues Asp-12, Lys-34, 61-70 (DWKLHDIGAT), Thr-116, Arg-177, Gln-186, Gly-206, and Arg-207. The active-site Proton donor is the Lys-63.

This sequence belongs to the OMP decarboxylase family. Type 1 subfamily. In terms of assembly, homodimer.

It catalyses the reaction orotidine 5'-phosphate + H(+) = UMP + CO2. It participates in pyrimidine metabolism; UMP biosynthesis via de novo pathway; UMP from orotate: step 2/2. Catalyzes the decarboxylation of orotidine 5'-monophosphate (OMP) to uridine 5'-monophosphate (UMP). This Caulobacter sp. (strain K31) protein is Orotidine 5'-phosphate decarboxylase.